A 2146-amino-acid chain; its full sequence is Phospholipid-transporting ATPase ABCA7 (2146 aa).

Residues 22-42 (PVQLLVELLWPLFLFFILVAV) traverse the membrane as a helical segment. Topologically, residues 43-549 (RHSHPPLEHH…DVFLRVLSRS (507 aa)) are extracellular. C75 and C225 are disulfide-bonded. N312 carries N-linked (GlcNAc...) asparagine glycosylation. The next 6 membrane-spanning stretches (helical) occupy residues 550–570 (LPLFLTLAWIYSVTLTVKAVV), 593–613 (LGWFLSCLGPFLLSAALLVLV), 626–646 (GVVFLFLAAFAVATVTQSFLL), 655–675 (LAAACGGLAYFSLYLPYVLCV), 687–707 (VAASLLSPVAFGFGCESLALL), and 727–747 (VFSLAQVSGLLLLDAALYGLA). Residues 807 to 1038 (VSVRSLEKRF…LGSGYYLTLV (232 aa)) form the ABC transporter 1 domain. 841 to 848 (GHNGAGKT) contacts ATP. A helical transmembrane segment spans residues 849-869 (TTLSILSGLFPPSGGSAFILG). Over residues 1048-1066 (EKADTDMEGSVDTRQEKKN) the composition is skewed to basic and acidic residues. Disordered regions lie at residues 1048–1072 (EKADTDMEGSVDTRQEKKNGSQGSR) and 1185–1209 (TALENGEPAGSAPETDQGSGPDAVG). Residues 1243-1263 (IVLPALFVGLALVFSLIVPPF) traverse the membrane as a helical segment. The Extracellular segment spans residues 1264 to 1537 (GHYPALRLSP…ALMASSVDVL (274 aa)). C1345 and C1359 are disulfide-bonded. The next 6 helical transmembrane spans lie at 1538–1558 (VSICVVFAMSFVPASFTLVLI), 1584–1604 (FLWDMCNYLVPACIVVLIFLA), 1621–1641 (LLLLLYGWSITPLMYPASFFF), 1649–1669 (VVLTCINLFIGINGSMATFVL), 1683–1703 (ILKQVFLIFPHFCLGRGLIDM), and 1729–1749 (VVGKNLLAMVIQGPLFLLFTL). The ABC transporter 2 domain occupies 1793 to 2025 (LVLRNLTKVY…FAAGHTLTLR (233 aa)). Position 1827 to 1834 (1827 to 1834 (GVNGAGKT)) interacts with ATP. The interval 2104–2146 (QGKDEDTEEQKEAGVGVDPAPGLQHPKRVSQFLDDPSTAETVL) is disordered.

Belongs to the ABC transporter superfamily. ABCA family. Post-translationally, N-glycosylated. Expressed in leukocytes (at protein level). Widely expressed. Highly expressed in myelo-lymphatic tissues including peripheral leukocytes, thymus, spleen and bone marrow. Expressed in the hippocampus and the cerebellum. Isoform 2: Abundant in lymph node, spleen, thymus and trachea. Isoform 1: Strongly expressed in brain and bone marrow.

It localises to the cell membrane. The protein localises to the golgi apparatus membrane. Its subcellular location is the early endosome membrane. It is found in the cytoplasm. The protein resides in the cell projection. It localises to the ruffle membrane. The protein localises to the phagocytic cup. Its subcellular location is the endoplasmic reticulum. The enzyme catalyses ATP + H2O + phospholipidSide 1 = ADP + phosphate + phospholipidSide 2.. It catalyses the reaction a 1,2-diacyl-sn-glycero-3-phosphocholine(out) + ATP + H2O = a 1,2-diacyl-sn-glycero-3-phosphocholine(in) + ADP + phosphate + H(+). It carries out the reaction a 1,2-diacyl-sn-glycero-3-phospho-L-serine(out) + ATP + H2O = a 1,2-diacyl-sn-glycero-3-phospho-L-serine(in) + ADP + phosphate + H(+). With respect to regulation, ATPase activity is decreased by cholesterol and ceramide. ATPase activity is stimulated by phosphatidylserine, phosphatidylcholine and sphingomyelin, but phosphatidylserine is more effective. Catalyzes the translocation of specific phospholipids from the cytoplasmic to the extracellular/lumenal leaflet of membrane coupled to the hydrolysis of ATP. Transports preferentially phosphatidylserine over phosphatidylcholine. Plays a role in lipid homeostasis and macrophage-mediated phagocytosis. Binds APOA1 and may function in apolipoprotein-mediated phospholipid efflux from cells. May also mediate cholesterol efflux. May regulate cellular ceramide homeostasis during keratinocyte differentiation. Involved in lipid raft organization and CD1D localization on thymocytes and antigen-presenting cells, which plays an important role in natural killer T-cell development and activation. Plays a role in phagocytosis of apoptotic cells by macrophages. Macrophage phagocytosis is stimulated by APOA1 or APOA2, probably by stabilization of ABCA7. Also involved in phagocytic clearance of amyloid-beta by microglia cells and macrophages. Further limits amyloid-beta production by playing a role in the regulation of amyloid-beta A4 precursor protein (APP) endocytosis and/or processing. Amyloid-beta is the main component of amyloid plaques found in the brains of Alzheimer patients. In Homo sapiens (Human), this protein is Phospholipid-transporting ATPase ABCA7.